The following is a 352-amino-acid chain: Uroporphyrinogen decarboxylase (352 aa).

Substrate contacts are provided by residues Arg26–Arg30, Asp76, Tyr153, Ser208, and His323.

This sequence belongs to the uroporphyrinogen decarboxylase family. As to quaternary structure, homodimer.

The protein resides in the cytoplasm. The enzyme catalyses uroporphyrinogen III + 4 H(+) = coproporphyrinogen III + 4 CO2. It functions in the pathway porphyrin-containing compound metabolism; protoporphyrin-IX biosynthesis; coproporphyrinogen-III from 5-aminolevulinate: step 4/4. Its function is as follows. Catalyzes the decarboxylation of four acetate groups of uroporphyrinogen-III to yield coproporphyrinogen-III. This Prochlorococcus marinus (strain MIT 9303) protein is Uroporphyrinogen decarboxylase.